Here is a 290-residue protein sequence, read N- to C-terminus: 4-hydroxybenzoate octaprenyltransferase (290 aa).

Helical transmembrane passes span 23–43 (IGTE…SDGY), 46–66 (LKMF…GCAI), 96–116 (AIWV…FLPI), 118–138 (TFYW…MKRY), 141–161 (LPQV…YTAT), 169–189 (CWLL…QYAI), 212–232 (IPII…ALYI), 235–255 (LLFP…IYQW), and 265–285 (LCFW…LAIL).

Belongs to the UbiA prenyltransferase family. Mg(2+) serves as cofactor.

The protein localises to the cell inner membrane. It catalyses the reaction all-trans-octaprenyl diphosphate + 4-hydroxybenzoate = 4-hydroxy-3-(all-trans-octaprenyl)benzoate + diphosphate. The protein operates within cofactor biosynthesis; ubiquinone biosynthesis. Its function is as follows. Catalyzes the prenylation of para-hydroxybenzoate (PHB) with an all-trans polyprenyl group. Mediates the second step in the final reaction sequence of ubiquinone-8 (UQ-8) biosynthesis, which is the condensation of the polyisoprenoid side chain with PHB, generating the first membrane-bound Q intermediate 3-octaprenyl-4-hydroxybenzoate. This is 4-hydroxybenzoate octaprenyltransferase from Acinetobacter baylyi (strain ATCC 33305 / BD413 / ADP1).